A 333-amino-acid polypeptide reads, in one-letter code: Cap-specific mRNA (nucleoside-2'-O-)-methyltransferase (333 aa).

Y22 provides a ligand contact to mRNA. Positions 39, 66, 68, 72, 95, 97, 116, and 138 each coordinate S-adenosyl-L-methionine. The interval 169–249 is binding to NPH-I; the sequence is PVASSLKWRC…NKIVRNKVVV (81 aa). The tract at residues 169 to 333 is binding to Rap94; it reads PVASSLKWRC…NSKRSVRSNK (165 aa). Residue K175 is the For methyltransferase activity of the active site. MRNA is bound by residues 177–180, D182, 205–207, and E233; these read RCPF and SAE. The disordered stretch occupies residues 305-333; sequence SHEPIQRKISSKNSMSKNRNSKRSVRSNK. Positions 311-322 are enriched in low complexity; sequence RKISSKNSMSKN. Residues 323–333 show a composition bias toward basic residues; the sequence is RNSKRSVRSNK.

The protein belongs to the class I-like SAM-binding methyltransferase superfamily. Poxvirus/kinetoplastid 2'-O-MTase family. As to quaternary structure, interacts with poly(A) polymerase catalytic subunit OPG063. Interacts with OPG109 and OPG123; these interactions might help linking transcription to capping and polyadenylation.

It is found in the virion. The catalysed reaction is a 5'-end (N(7)-methyl 5'-triphosphoguanosine)-ribonucleoside in mRNA + S-adenosyl-L-methionine = a 5'-end (N(7)-methyl 5'-triphosphoguanosine)-(2'-O-methyl-ribonucleoside) in mRNA + S-adenosyl-L-homocysteine + H(+). Functionally, displays methyltransferase, positive regulation of the poly(A) polymerase and transcription elongation activities. Involved in the modification of both mRNA ends and in intermediate and late gene positive transcription elongation. At the mRNAs 5' end, methylates the ribose 2' OH group of the first transcribed nucleotide, thereby producing a 2'-O-methylpurine cap. At the 3' end, functions as a processivity factor which stimulates the activity of the viral poly(A) polymerase OPG063 that creates mRNA's poly(A) tail. In the presence of OPG102, OPG063 does not dissociate from the RNA allowing tail elongation to around 250 adenylates. The polypeptide is Cap-specific mRNA (nucleoside-2'-O-)-methyltransferase (OPG102) (Vaccinia virus (strain Western Reserve) (VACV)).